The primary structure comprises 185 residues: DNA-directed RNA polymerase 21 kDa subunit (185 aa).

Belongs to the poxviridae DNA-directed RNA polymerase 22 kDa subunit family. As to quaternary structure, the DNA-dependent RNA polymerase used for intermediate and late genes expression consists of eight subunits Rpo30/OPG66, Rpo7/OPG90, Rpo22/OPG103, Rpo147/OPG105, Rpo18/OPG119, Rpo19/OPG131, Rpo132/OPG151 and Rpo35/OPG156. The same holoenzyme, with the addition of the transcription-specificity factor OPG109, is used for early gene expression.

The protein resides in the virion. The enzyme catalyses RNA(n) + a ribonucleoside 5'-triphosphate = RNA(n+1) + diphosphate. In terms of biological role, part of the DNA-dependent RNA polymerase which catalyzes the transcription of viral DNA into RNA using the four ribonucleoside triphosphates as substrates. Responsible for the transcription of early, intermediate and late genes. DNA-dependent RNA polymerase associates with the early transcription factor (ETF), itself composed of OPG118 and OPG133, thereby allowing the early genes transcription. Late transcription, and probably also intermediate transcription, require newly synthesized RNA polymerase. In Oryctolagus cuniculus (Rabbit), this protein is DNA-directed RNA polymerase 21 kDa subunit (OPG103).